A 231-amino-acid chain; its full sequence is MATNTMLCLLILSVVLALAFATNKKGDEEPENHSTGIFGKVGRVVTVALAMSSRLGGADATRGGGAVYGGNLKSNLLPNNNWMAPPPPMAMRSAKVYDSKHSPAEYLKKFAQDFRRKTGMHSQRHHEETTLEQEKRVAGAGPDPIHHQDTTLEQEKRAVPAGPDPKHHEETTLEQEKRAVPAGPDPKHHEETTLEQEKRAVPAGPDPKHHEETTFEQEKRGAPAGPDPIHH.

Residues 1–21 (MATNTMLCLLILSVVLALAFA) form the signal peptide. Residues 21 to 83 (ATNKKGDEEP…SNLLPNNNWM (63 aa)) form a required for secretion from the host cytoplasm to the host apoplasm region. N32 carries an N-linked (GlcNAc...) asparagine glycan. Residues 116–231 (RKTGMHSQRH…APAGPDPIHH (116 aa)) are disordered. Basic and acidic residues-rich tracts occupy residues 125 to 137 (HHEETTLEQEKRV) and 144 to 221 (PIHH…EKRG). An A-1 repeat occupies 127-135 (EETTLEQEK). The segment at 127–219 (EETTLEQEKR…HEETTFEQEK (93 aa)) is 5 X approximate repeat A. The stretch at 136–147 (RVAGAGPDPIHH) is one CLE-1 repeat. The 5 X approximate repeat CLE stretch occupies residues 136-231 (RVAGAGPDPI…APAGPDPIHH (96 aa)). An A-2 repeat occupies 148–156 (QDTTLEQEK). A CLE-2 repeat occupies 157 to 168 (RAVPAGPDPKHH). The stretch at 169-177 (EETTLEQEK) is one A-3 repeat. The stretch at 178–189 (RAVPAGPDPKHH) is one CLE-3 repeat. Residues 190–198 (EETTLEQEK) form an A-4 repeat. Residues 199–210 (RAVPAGPDPKHH) form a CLE-4 repeat. The stretch at 211 to 219 (EETTFEQEK) is one A-5 repeat. One copy of the CLE-5 repeat lies at 220–231 (RGAPAGPDPIHH).

This sequence belongs to the CLV3/ESR signal peptide family. Highly expressed exclusively within the dorsal esophageal gland cell during syncytium formation in host plants.

The protein resides in the secreted. It localises to the host cytoplasm. Its subcellular location is the host extracellular space. It is found in the extracellular space. The protein localises to the apoplast. Functionally, mimics host plant CLE extracellular signal peptides that regulate cell fate. May play a role in the differentiation or division of feeding cells (syncytia) induced in plant roots during infection. In Globodera rostochiensis (Golden nematode worm), this protein is CLAVATA3/ESR (CLE)-related protein 4B-1 (CLE-4B-1).